An 885-amino-acid polypeptide reads, in one-letter code: Leucine--tRNA ligase (885 aa).

A 'HIGH' region motif is present at residues 48–58; sequence PYPSGKLHMGH. Positions 639 to 643 match the 'KMSKS' region motif; sequence TMSKS. Residue Lys-642 participates in ATP binding.

This sequence belongs to the class-I aminoacyl-tRNA synthetase family.

The protein localises to the cytoplasm. It carries out the reaction tRNA(Leu) + L-leucine + ATP = L-leucyl-tRNA(Leu) + AMP + diphosphate. The chain is Leucine--tRNA ligase from Bordetella petrii (strain ATCC BAA-461 / DSM 12804 / CCUG 43448).